The sequence spans 415 residues: D-galactonate dehydratase family member RspA (415 aa).

Asn48 and His133 together coordinate substrate. The active-site Proton donor/acceptor is Tyr170. Asp223 contributes to the Mg(2+) binding site. Residue His225 is the Proton donor/acceptor of the active site. The Mg(2+) site is built by Glu249, Asp250, and Glu275. Substrate is bound by residues Glu275, Arg296, His325, Asp329, and Glu352.

The protein belongs to the mandelate racemase/muconate lactonizing enzyme family. GalD subfamily. Mg(2+) serves as cofactor.

It carries out the reaction D-mannonate = 2-dehydro-3-deoxy-D-gluconate + H2O. Functionally, has low D-mannonate dehydratase activity (in vitro), suggesting that this is not a physiological substrate and that it has no significant role in D-mannonate degradation in vivo. Has no detectable activity with a panel of 70 other acid sugars (in vitro). The chain is D-galactonate dehydratase family member RspA (rspA) from Escherichia coli O6:H1 (strain CFT073 / ATCC 700928 / UPEC).